The following is a 282-amino-acid chain: UPF0294 protein VIBHAR_03217 (282 aa).

It belongs to the UPF0294 family.

Its subcellular location is the cytoplasm. The chain is UPF0294 protein VIBHAR_03217 from Vibrio campbellii (strain ATCC BAA-1116).